The chain runs to 477 residues: Inositol phosphosphingolipids phospholipase C (477 aa).

The Cytoplasmic segment spans residues 1–398; it reads MYNRKDRDVH…QRQKFFRGLH (398 aa). Position 100 (Glu100) interacts with Mg(2+). The active-site Proton acceptor is the His334. A helical membrane pass occupies residues 399 to 417; sequence FWASILLLIASLVVTTFTA. Topologically, residues 418–424 are mitochondrial intermembrane; sequence NKAGWSS. Residues 425 to 449 traverse the membrane as a helical segment; it reads IFWVLFAIAVSISGTIDGAISFLFG. Over 450–477 the chain is Cytoplasmic; that stretch reads RSEIRALIEVEQEVLDAEHHLQTFLSEK.

It belongs to the neutral sphingomyelinase family. It depends on Mg(2+) as a cofactor.

Its subcellular location is the endoplasmic reticulum membrane. The protein localises to the mitochondrion outer membrane. The enzyme catalyses an N-acyl-(4R)-4-hydroxysphinganine-1-phosphoinositol + H2O = 1D-myo-inositol 1-phosphate + an N-acyl-(4R)-4-hydroxysphinganine + H(+). It catalyses the reaction a mannosylinositol-1-phospho-N-acyl-sphingoid base + H2O = mannosylinositol-1-phosphate + an N-acyl-sphingoid base + H(+). It carries out the reaction an inositol phosphomannosylinositol-1-phospho-N-acyl-(4R)-4-hydroxysphinganine + H2O = mannosyldiinositol-1-phosphate + an N-acyl-(4R)-4-hydroxysphinganine + H(+). It functions in the pathway lipid metabolism; sphingolipid metabolism. Activated through localization to mitochondria in specific growth phases. Functionally, responsible for the hydrolysis of the phosphosphingolipids (IPS), inositol phosphorylceramide (IPC), mannosylinositol phosphorylceramide (MIPC), and mannosyldiinositol phosphorylceramide (M(IP)2C). Regulates sphingolipid metabolism in mitochondria, especially the formation of alpha-hydroxylated very long chain phytoceramides. The generated ceramides contribute to the normal function of mitochondria. Also active on sphingomyelin (SM), but this activity is probably not physiologically relevant. This chain is Inositol phosphosphingolipids phospholipase C, found in Saccharomyces cerevisiae (strain ATCC 204508 / S288c) (Baker's yeast).